The sequence spans 415 residues: Gamma-glutamyl phosphate reductase (415 aa).

This sequence belongs to the gamma-glutamyl phosphate reductase family.

The protein localises to the cytoplasm. It catalyses the reaction L-glutamate 5-semialdehyde + phosphate + NADP(+) = L-glutamyl 5-phosphate + NADPH + H(+). It functions in the pathway amino-acid biosynthesis; L-proline biosynthesis; L-glutamate 5-semialdehyde from L-glutamate: step 2/2. In terms of biological role, catalyzes the NADPH-dependent reduction of L-glutamate 5-phosphate into L-glutamate 5-semialdehyde and phosphate. The product spontaneously undergoes cyclization to form 1-pyrroline-5-carboxylate. The sequence is that of Gamma-glutamyl phosphate reductase from Dictyoglomus thermophilum (strain ATCC 35947 / DSM 3960 / H-6-12).